The following is an 80-amino-acid chain: Defensin-like protein 17 (80 aa).

The first 29 residues, 1–29 (MAKSATIITFLFAALVLFAAFEAPTMVEA), serve as a signal peptide directing secretion. Q30 carries the post-translational modification Pyrrolidone carboxylic acid. Cystine bridges form between C33–C80, C44–C65, C50–C74, and C54–C76.

Belongs to the DEFL family.

Its subcellular location is the secreted. Its function is as follows. Confers broad-spectrum resistance to pathogens. In Arabidopsis thaliana (Mouse-ear cress), this protein is Defensin-like protein 17 (PDF1.2C).